A 525-amino-acid polypeptide reads, in one-letter code: Golgi resident protein GCP60 (525 aa).

Position 2 is an N-acetylalanine (A2). The segment at 12-68 (VSLDGLTLSPDSEERPGAEGAPPQTPPSSAPGNGLGSGASGQQREPGEAAAEGAAEE) is disordered. A Phosphoserine modification is found at S13. A Phosphothreonine modification is found at T18. A phosphoserine mark is found at S20 and S40. Over residues 52–64 (GQQREPGEAAAEG) the composition is skewed to low complexity. The region spanning 80 to 171 (LEELYGLALR…LNKCCPLLSA (92 aa)) is the ACB domain. A coiled-coil region spans residues 169 to 254 (LSAYVASHRI…AALNSQTAVQ (86 aa)). Residues 180 to 226 (KEEEEKRRKAEEERRQREEEERERLQKEEEKRKREKEDRLRREEEER) form a disordered region. The tract at residues 238 to 305 (QQKQQIMAAL…QQQAALQKQQ (68 aa)) is q domain; Interaction with PI4KB, TBC1D22A and TBC1D22B. Residues 319-336 (KVNTAGASDTLSVNGQAK) are compositionally biased toward polar residues. The tract at residues 319–346 (KVNTAGASDTLSVNGQAKTHTENSEKVL) is disordered. Residues 337 to 346 (THTENSEKVL) show a composition bias toward basic and acidic residues. Positions 381 to 523 (KEKIRQDADS…SKSVYYRVYY (143 aa)) constitute a GOLD domain. A coiled-coil region spans residues 448-470 (SDEEEEEEENVTCEEKAKKNANK).

Homodimer. Interacts with the C-terminal cytoplasmic domain of giantin/GOLGB1. Interacts with PBR and PKA regulatory subunit RI-alpha. Does not interact with PKA regulatory subunit RI-beta nor PKA regulatory subunit RII-alpha. Interacts (via Q domain) with PI4KB (via N-terminus). Interacts (via Q domain) with TBC1D22A and TBC1D22B; interactions with PI4KB and with TBC1D22A and TBC1D22B are mutually exclusive. Interacts with C10ORF76 and RAB11B. As to expression, expressed in brain (hippocampus, olfactory bulb, neuronal and glial cells of the cortex), eye, submaxillary gland, testis (interstitial and tubular compartments), ovary (granulosa cells, theca cells at late stages and primary follicles), adrenal gland (fasciculata and glomerulosa cells), heart, liver, and steroidogenic cell lines.

It is found in the golgi apparatus membrane. Its subcellular location is the mitochondrion. Involved in the maintenance of Golgi structure by interacting with giantin, affecting protein transport between the endoplasmic reticulum and Golgi. Involved in hormone-induced steroid biosynthesis in testicular Leydig cells. Recruits PI4KB to the Golgi apparatus membrane; enhances the enzyme activity of PI4KB activity via its membrane recruitment thereby increasing the local concentration of the substrate in the vicinity of the kinase. In Mus musculus (Mouse), this protein is Golgi resident protein GCP60 (Acbd3).